Consider the following 121-residue polypeptide: Movement protein TGBp3 (121 aa).

The tract at residues 1-40 (MHYPTEADTSTGPNPSATSAPVRPRHVTPSLSPSSSSSPS) is disordered. Topologically, residues 1–43 (MHYPTEADTSTGPNPSATSAPVRPRHVTPSLSPSSSSSPSPDS) are lumenal. Positions 7–19 (ADTSTGPNPSATS) are enriched in polar residues. Low complexity predominate over residues 29 to 40 (PSLSPSSSSSPS). The helical transmembrane segment at 44–64 (FYYFLAAAVILTAALAAALLT) threads the bilayer. The Cytoplasmic segment spans residues 65 to 121 (PNPGCTIVITGHTTIIQGSCPIPPQLVLAAHPRGLSLEQYLKFTNTLPDGSQHRSHR).

This sequence belongs to the Tymovirales TGBp3 protein family.

Its subcellular location is the host endoplasmic reticulum membrane. In terms of biological role, plays a role in viral cell-to-cell propagation, by facilitating genome transport to neighboring plant cells through plasmosdesmata. May induce the formation of granular vesicles derived from the Endoplasmic reticulum, which align on actin filaments. The chain is Movement protein TGBp3 from Plantago asiatica (P1AMV).